Reading from the N-terminus, the 330-residue chain is 4-hydroxythreonine-4-phosphate dehydrogenase (330 aa).

2 residues coordinate substrate: His135 and Thr136. A divalent metal cation is bound by residues His165, His210, and His266. The substrate site is built by Lys274, Asn283, and Arg292.

It belongs to the PdxA family. In terms of assembly, homodimer. Requires Zn(2+) as cofactor. Mg(2+) serves as cofactor. Co(2+) is required as a cofactor.

Its subcellular location is the cytoplasm. It carries out the reaction 4-(phosphooxy)-L-threonine + NAD(+) = 3-amino-2-oxopropyl phosphate + CO2 + NADH. The protein operates within cofactor biosynthesis; pyridoxine 5'-phosphate biosynthesis; pyridoxine 5'-phosphate from D-erythrose 4-phosphate: step 4/5. Its function is as follows. Catalyzes the NAD(P)-dependent oxidation of 4-(phosphooxy)-L-threonine (HTP) into 2-amino-3-oxo-4-(phosphooxy)butyric acid which spontaneously decarboxylates to form 3-amino-2-oxopropyl phosphate (AHAP). The sequence is that of 4-hydroxythreonine-4-phosphate dehydrogenase from Vibrio cholerae serotype O1 (strain ATCC 39315 / El Tor Inaba N16961).